Here is a 197-residue protein sequence, read N- to C-terminus: Imidazoleglycerol-phosphate dehydratase (197 aa).

The protein belongs to the imidazoleglycerol-phosphate dehydratase family.

It is found in the cytoplasm. It catalyses the reaction D-erythro-1-(imidazol-4-yl)glycerol 3-phosphate = 3-(imidazol-4-yl)-2-oxopropyl phosphate + H2O. Its pathway is amino-acid biosynthesis; L-histidine biosynthesis; L-histidine from 5-phospho-alpha-D-ribose 1-diphosphate: step 6/9. The polypeptide is Imidazoleglycerol-phosphate dehydratase (Syntrophomonas wolfei subsp. wolfei (strain DSM 2245B / Goettingen)).